We begin with the raw amino-acid sequence, 213 residues long: tRNA (guanine-N(7)-)-methyltransferase (213 aa).

The S-adenosyl-L-methionine site is built by Glu-44, Glu-69, Asn-96, and Asp-118. Asp-118 is an active-site residue. A substrate-binding site is contributed by Lys-122. Residues 124-129 form an interaction with RNA region; the sequence is RHEKRR. Substrate-binding positions include Asp-154 and 191–194; that span reads TEYE.

This sequence belongs to the class I-like SAM-binding methyltransferase superfamily. TrmB family.

It carries out the reaction guanosine(46) in tRNA + S-adenosyl-L-methionine = N(7)-methylguanosine(46) in tRNA + S-adenosyl-L-homocysteine. The protein operates within tRNA modification; N(7)-methylguanine-tRNA biosynthesis. Functionally, catalyzes the formation of N(7)-methylguanine at position 46 (m7G46) in tRNA. The polypeptide is tRNA (guanine-N(7)-)-methyltransferase (Bacillus licheniformis (strain ATCC 14580 / DSM 13 / JCM 2505 / CCUG 7422 / NBRC 12200 / NCIMB 9375 / NCTC 10341 / NRRL NRS-1264 / Gibson 46)).